Reading from the N-terminus, the 66-residue chain is Large ribosomal subunit protein uL30 (66 aa).

This sequence belongs to the universal ribosomal protein uL30 family. In terms of assembly, part of the 50S ribosomal subunit.

This Chloroherpeton thalassium (strain ATCC 35110 / GB-78) protein is Large ribosomal subunit protein uL30.